A 699-amino-acid chain; its full sequence is Extracellular matrix protein 2 (699 aa).

A signal peptide spans M1 to G20. The VWFC domain occupies G101–S158. Residues E176–E186 are compositionally biased toward basic and acidic residues. The segment at E176–L316 is disordered. Positions Q212 to T224 are enriched in acidic residues. Over residues G243–L260 the composition is skewed to basic and acidic residues. Acidic residues predominate over residues E270–D291. The Cell attachment site signature appears at R294–D296. One can recognise an LRRNT domain in the interval P307 to Q344. LRR repeat units lie at residues N368–A388, K394–T415, L416–D436, Q439–A459, S465–P484, S486–H507, K510–A530, N536–S557, L558–H578, G582–S602, S609–M630, A632–N653, and N661–C684. N378 is a glycosylation site (N-linked (GlcNAc...) asparagine). Residue N449 is glycosylated (N-linked (GlcNAc...) asparagine). N506 carries N-linked (GlcNAc...) asparagine glycosylation.

Belongs to the small leucine-rich proteoglycan (SLRP) family. SLRP class I subfamily. Interacts with numerous extracellular matrix proteins. Interacts with MSL1 and RASSF1. Expressed predominantly in adipose tissue as well as female-specific organs such as mammary gland, ovary, and uterus.

The protein resides in the secreted. It is found in the extracellular space. The protein localises to the extracellular matrix. Functionally, promotes matrix assembly and cell adhesiveness. This Homo sapiens (Human) protein is Extracellular matrix protein 2 (ECM2).